Consider the following 1204-residue polypeptide: ATP-dependent helicase/nuclease subunit A (1204 aa).

Residues Thr-2–Thr-469 enclose the UvrD-like helicase ATP-binding domain. Ala-23 to Thr-30 contacts ATP. Residues Glu-496–Gly-784 enclose the UvrD-like helicase C-terminal domain.

It belongs to the helicase family. AddA subfamily. As to quaternary structure, heterodimer of AddA and AddB/RexB. Mg(2+) is required as a cofactor.

The catalysed reaction is Couples ATP hydrolysis with the unwinding of duplex DNA by translocating in the 3'-5' direction.. It catalyses the reaction ATP + H2O = ADP + phosphate + H(+). In terms of biological role, the heterodimer acts as both an ATP-dependent DNA helicase and an ATP-dependent, dual-direction single-stranded exonuclease. Recognizes the chi site generating a DNA molecule suitable for the initiation of homologous recombination. The AddA nuclease domain is required for chi fragment generation; this subunit has the helicase and 3' -&gt; 5' nuclease activities. The sequence is that of ATP-dependent helicase/nuclease subunit A from Lactobacillus johnsonii (strain CNCM I-12250 / La1 / NCC 533).